The following is a 311-amino-acid chain: tRNA-cytidine(32) 2-sulfurtransferase (311 aa).

Residues 47–52 (SGGKDS) carry the PP-loop motif motif. 3 residues coordinate [4Fe-4S] cluster: C122, C125, and C213.

The protein belongs to the TtcA family. As to quaternary structure, homodimer. Mg(2+) serves as cofactor. [4Fe-4S] cluster is required as a cofactor.

Its subcellular location is the cytoplasm. It carries out the reaction cytidine(32) in tRNA + S-sulfanyl-L-cysteinyl-[cysteine desulfurase] + AH2 + ATP = 2-thiocytidine(32) in tRNA + L-cysteinyl-[cysteine desulfurase] + A + AMP + diphosphate + H(+). It participates in tRNA modification. In terms of biological role, catalyzes the ATP-dependent 2-thiolation of cytidine in position 32 of tRNA, to form 2-thiocytidine (s(2)C32). The sulfur atoms are provided by the cysteine/cysteine desulfurase (IscS) system. This chain is tRNA-cytidine(32) 2-sulfurtransferase, found in Escherichia coli O45:K1 (strain S88 / ExPEC).